The following is a 578-amino-acid chain: Glucans biosynthesis protein G (578 aa).

Residues 1-37 form the signal peptide; the sequence is MIVSPCIAPRIPGTRLRKAMLAGVALVGLLSAGQLWA. A disordered region spans residues 511–578; it reads VPVEAPKPAK…TWSYQLPADE (68 aa). Basic and acidic residues predominate over residues 517–543; sequence KPAKDSKQDKAAAKHAHAKAEKAKAEQ. Residues 544–554 are compositionally biased toward low complexity; that stretch reads PAEQPAADAAS.

This sequence belongs to the OpgD/OpgG family.

It is found in the periplasm. Its pathway is glycan metabolism; osmoregulated periplasmic glucan (OPG) biosynthesis. Functionally, involved in the biosynthesis of osmoregulated periplasmic glucans (OPGs). The sequence is that of Glucans biosynthesis protein G from Pseudomonas entomophila (strain L48).